Here is a 154-residue protein sequence, read N- to C-terminus: MKLHDLTPAPGSRKPKKRVGRGPGGTDKTAGRGHKGQKSRSGAGKGPFFEGGRSTLISRLPKRGFNNVGTTYEVVNLAQLARVEGDTLDRTALERAGLVRRKDRPVKLLARGQVTRAVTVQVDAASEAAIRAVEAAGGRVVVTGADRQNAEQAG.

Positions 1-54 (MKLHDLTPAPGSRKPKKRVGRGPGGTDKTAGRGHKGQKSRSGAGKGPFFEGGRS) are disordered.

The protein belongs to the universal ribosomal protein uL15 family. In terms of assembly, part of the 50S ribosomal subunit.

Binds to the 23S rRNA. The sequence is that of Large ribosomal subunit protein uL15 from Deinococcus geothermalis (strain DSM 11300 / CIP 105573 / AG-3a).